Here is a 716-residue protein sequence, read N- to C-terminus: Cyclic nucleotide-gated ion channel 1 (716 aa).

Residues 1–97 (MNFRQEKFVR…QGPFLQRWNK (97 aa)) are Cytoplasmic-facing. Residues 98 to 118 (IFVLACIIAVSLDPLFFYVPI) traverse the membrane as a helical segment. Residues 119 to 132 (IDDAKKCLGIDKKM) are Extracellular-facing. The chain crosses the membrane as a helical span at residues 133–153 (EITASVLRSFTDVFYVLHIIF). Over 154-187 (QFRTGFIAPSSRVFGRGVLVEDKREIAKRYLSSH) the chain is Cytoplasmic. A helical membrane pass occupies residues 188–208 (FIIDILAVLPLPQMVILIIIP). Topologically, residues 209 to 220 (HMRGSSSLNTKN) are extracellular. A helical transmembrane segment spans residues 221 to 241 (MLKFIVFFQYIPRFIRIYPLY). Topologically, residues 242 to 259 (KEVTRTSGILTETAWAGA) are cytoplasmic. The helical transmembrane segment at 260–280 (AFNLFLYMLASHVFGAFWYLF) threads the bilayer. Residues 281–379 (SIERETVCWK…GQNLKTSTYI (99 aa)) are Extracellular-facing. The chain crosses the membrane as a helical span at residues 380 to 400 (WEICFAVFISIAGLVLFSFLI). The Cytoplasmic segment spans residues 401–716 (GNMQTYLQST…PAEPDFNSDD (316 aa)). Residues 486–610 (MFEK…SKQL) and E557 contribute to the a nucleoside 3',5'-cyclic phosphate site. Residues 602–617 (FRRLHSKQLRHTFRYY) are calmodulin-binding. The 30-residue stretch at 622 to 651 (KTWAACFIQAAWRRYIKKKLEESLKEEENR) folds into the IQ domain. Residues 689-716 (SVRKPRMPERMPPMLLQKPAEPDFNSDD) form a disordered region.

This sequence belongs to the cyclic nucleotide-gated cation channel (TC 1.A.1.5) family. As to quaternary structure, homotetramer or heterotetramer (Potential). Binds calmodulin-2/3/5 with a higher affinity than calmodulin-1/4. In terms of tissue distribution, expressed in the whole plant but only weakly in roots.

The protein localises to the cell membrane. In terms of biological role, acts as a cyclic nucleotide-gated ion channel. Can be activated by cyclic AMP which leads to an opening of the cation channel. May be responsible for cAMP-induced calcium entry in cells and thus should be involved in the calcium signal transduction. Could transport K(+), Na(+) and Pb(2+). The polypeptide is Cyclic nucleotide-gated ion channel 1 (CNGC1) (Arabidopsis thaliana (Mouse-ear cress)).